Reading from the N-terminus, the 305-residue chain is Serine/threonine-protein phosphatase ppe1 (305 aa).

Mn(2+) contacts are provided by aspartate 51, histidine 53, aspartate 79, and asparagine 111. Histidine 112 acts as the Proton donor in catalysis. Residues histidine 161 and histidine 235 each contribute to the Mn(2+) site.

The protein belongs to the PPP phosphatase family. PP-6 (PP-V) subfamily. Interacts with sts5, ekc1 and mis12. Requires Mn(2+) as cofactor.

The protein resides in the nucleus. The catalysed reaction is O-phospho-L-seryl-[protein] + H2O = L-seryl-[protein] + phosphate. It carries out the reaction O-phospho-L-threonyl-[protein] + H2O = L-threonyl-[protein] + phosphate. In terms of biological role, has a role in chromosome segregation. May provide a dynamic connection between kinetochore microtubules and kinetochore chromatin. Negatively regulates mis12. The polypeptide is Serine/threonine-protein phosphatase ppe1 (ppe1) (Schizosaccharomyces pombe (strain 972 / ATCC 24843) (Fission yeast)).